A 256-amino-acid polypeptide reads, in one-letter code: BI1-like protein (256 aa).

The next 7 helical transmembrane spans lie at 53-73 (VYGI…VVVL), 85-105 (PGIL…LHIY), 113-133 (LILL…SCAM), 138-158 (IVLQ…AYTF), 167-187 (FSFL…TSFI), 189-209 (MFFP…ALVF), and 228-248 (EYIL…LTIL).

This sequence belongs to the BI1 family.

It is found in the membrane. The sequence is that of BI1-like protein from Arabidopsis thaliana (Mouse-ear cress).